A 524-amino-acid chain; its full sequence is Beta-glucosidase 21 (524 aa).

The first 24 residues, 1–24 (MALQKFPLMGLLLLLTILVSVTTA), serve as a signal peptide directing secretion. Gln55 contributes to the a beta-D-glucoside binding site. N-linked (GlcNAc...) asparagine glycosylation occurs at Asn61. Residues His158 and 203 to 204 (NE) contribute to the a beta-D-glucoside site. Glu204 functions as the Proton donor in the catalytic mechanism. Cys223 and Cys230 form a disulfide bridge. A beta-D-glucoside is bound by residues Tyr346, Glu418, Trp468, 475–476 (EW), and Phe484. Glu418 (nucleophile) is an active-site residue. Residue Asn494 is glycosylated (N-linked (GlcNAc...) asparagine). Residues 521-524 (RDEL) carry the Prevents secretion from ER motif.

Belongs to the glycosyl hydrolase 1 family. Component of the PYK10 complex, at least composed of PYK10/BGLU23, BGLU21, BGLU22, JAL22, JAL23, PBP1/JAL30, PBP2/JAL31, JAL32, JAL33, JAL34, JAL35, GLL22 and GLL23. As to expression, expressed exclusively in roots.

Its subcellular location is the endoplasmic reticulum lumen. The catalysed reaction is Hydrolysis of terminal, non-reducing beta-D-glucosyl residues with release of beta-D-glucose.. Activated upon binding to PBP1 or PBP2. Its function is as follows. Beta-D-glucosidase active on scopolin &gt;&gt; esculin &gt;&gt; 4-MU-glucoside &gt; DIMBOA-glucoside. No activity with pNP-glucoside, oNP-glucoside and sinigrin as substrates. This chain is Beta-glucosidase 21, found in Arabidopsis thaliana (Mouse-ear cress).